Here is a 355-residue protein sequence, read N- to C-terminus: Phenylalanine--tRNA ligase alpha subunit (355 aa).

Glutamate 273 is a Mg(2+) binding site.

Belongs to the class-II aminoacyl-tRNA synthetase family. Phe-tRNA synthetase alpha subunit type 1 subfamily. Tetramer of two alpha and two beta subunits. It depends on Mg(2+) as a cofactor.

Its subcellular location is the cytoplasm. It catalyses the reaction tRNA(Phe) + L-phenylalanine + ATP = L-phenylalanyl-tRNA(Phe) + AMP + diphosphate + H(+). This Bifidobacterium longum (strain NCC 2705) protein is Phenylalanine--tRNA ligase alpha subunit.